Here is a 180-residue protein sequence, read N- to C-terminus: Large ribosomal subunit protein uL22 (180 aa).

Disordered regions lie at residues 1–20 (MTKP…CKSR) and 160–180 (PKPA…EISA). The segment covering 8-20 (KTPSNPEKSCKSR) has biased composition (polar residues).

It belongs to the universal ribosomal protein uL22 family.

This is Large ribosomal subunit protein uL22 (rpl17) from Dictyostelium discoideum (Social amoeba).